Consider the following 464-residue polypeptide: Olfactomedin (464 aa).

A signal peptide spans 1 to 16; the sequence is MYICLLTLVLIHAAAA. N-linked (GlcNAc...) asparagine glycosylation is found at N21, N85, N143, N228, N279, and N383. One can recognise an Olfactomedin-like domain in the interval 192 to 464; the sequence is SCQHQGLAHI…LLHYDIALKP (273 aa). The cysteines at positions 193 and 394 are disulfide-linked.

Oligomer; disulfide-linked. In terms of processing, most, if not all, of the six potential sites for N-glycosylation carry carbohydrate moieties of 8-10 sugar residues. As to expression, expressed exclusively in olfactory neuroepithelium.

The protein localises to the secreted. It localises to the extracellular space. May influence the maintenance, growth, or differentiation of chemosensory cilia on the apical dendrites of olfactory neurons. Major component of the extracellular matrix of the olfactory neuroepithelium. In Aquarana catesbeiana (American bullfrog), this protein is Olfactomedin.